Here is a 186-residue protein sequence, read N- to C-terminus: Apolipophorin-3 (186 aa).

The N-terminal stretch at Met-1–Ala-18 is a signal peptide. A propeptide spanning residues Gly-19 to Arg-23 is cleaved from the precursor.

This sequence belongs to the insect apolipophorin-3 family. Equilibrium between a soluble monomer and a bound lipoprotein form. Apolipophorin-3 associates with lipophorin during lipid loading until each particle contains 9 or 14 molecules of apolipophorin-3. Expressed in hemolymph. Also found in hemocytes and fat body.

Its subcellular location is the secreted. Assists in the loading of diacylglycerol, generated from triacylglycerol stores in the fat body through the action of adipokinetic hormone, into lipophorin, the hemolymph lipoprotein. It increases the lipid carrying capacity of lipophorin by covering the expanding hydrophobic surface resulting from diacylglycerol uptake. It thus plays a critical role in the transport of lipids during flight in several species of insects. Has antibacterial activity against the Gram-positive bacteria L.monocytogenes (MIC=6.5 uM). Lacks antibacterial activity against the Gram-positive bacteria B.circulans, M.luteus, S.aureus, and S.lutea, and the Gram-negative bacteria E.coli D31, E.coli ATCC 25922, and S.typhimurium. Lacks antifungal activity against S.cerevisiae, P.pastoris, Z.marxianus, C.albicans, C.wickerhamii, A.niger, F.oxysporum, and T.harizianum. This chain is Apolipophorin-3, found in Galleria mellonella (Greater wax moth).